We begin with the raw amino-acid sequence, 461 residues long: L-seryl-tRNA(Sec) selenium transferase (461 aa).

Lys-294 carries the post-translational modification N6-(pyridoxal phosphate)lysine.

The protein belongs to the SelA family. Pyridoxal 5'-phosphate serves as cofactor.

It is found in the cytoplasm. It catalyses the reaction L-seryl-tRNA(Sec) + selenophosphate + H(+) = L-selenocysteinyl-tRNA(Sec) + phosphate. It functions in the pathway aminoacyl-tRNA biosynthesis; selenocysteinyl-tRNA(Sec) biosynthesis; selenocysteinyl-tRNA(Sec) from L-seryl-tRNA(Sec) (bacterial route): step 1/1. Its function is as follows. Converts seryl-tRNA(Sec) to selenocysteinyl-tRNA(Sec) required for selenoprotein biosynthesis. The sequence is that of L-seryl-tRNA(Sec) selenium transferase from Haemophilus influenzae (strain ATCC 51907 / DSM 11121 / KW20 / Rd).